Here is a 169-residue protein sequence, read N- to C-terminus: Methanogen homoaconitase small subunit (169 aa).

Residues 27-30 carry the YLRT motif; the sequence is YLRT.

The protein belongs to the LeuD family. LeuD type 2 subfamily. In terms of assembly, heterotetramer of 2 HacA and 2 HacB proteins.

It carries out the reaction (2R)-homocitrate = (2R,3S)-homoisocitrate. It catalyses the reaction (2R)-homocitrate = cis-homoaconitate + H2O. The catalysed reaction is (2R,3S)-homoisocitrate = cis-homoaconitate + H2O. The enzyme catalyses cis-(homo)2aconitate + H2O = (2R,3S)-iso(homo)2citrate. It carries out the reaction cis-(homo)3aconitate + H2O = (2R,3S)-iso(homo)3citrate. It functions in the pathway organic acid metabolism; 2-oxosuberate biosynthesis. Its function is as follows. Component of a hydro-lyase with broad substrate specificity for cis-unsaturated tricarboxylic acids. Catalyzes both the reversible dehydration of (R)-homocitrate ((R)-2-hydroxybutane-1,2,4-tricarboxylate) to produce cis-homoaconitate ((Z)-but-1-ene-1,2,4-tricarboxylate), and its hydration to homoisocitrate ((1R,2S)-1-hydroxybutane-1,2,4-tricarboxylate). Is also able to hydrate the analogous longer chain substrates cis-homo(2)-aconitate, cis-homo(3)-aconitate. These reactions are part of the biosynthesis pathway of coenzyme B. In Methanosarcina mazei (strain ATCC BAA-159 / DSM 3647 / Goe1 / Go1 / JCM 11833 / OCM 88) (Methanosarcina frisia), this protein is Methanogen homoaconitase small subunit (hacB).